Reading from the N-terminus, the 181-residue chain is Adenylate kinase (181 aa).

ATP is bound at residue 7–15 (GVAGVGKTT).

It belongs to the archaeal adenylate kinase family.

It localises to the cytoplasm. It carries out the reaction AMP + ATP = 2 ADP. In Thermoplasma volcanium (strain ATCC 51530 / DSM 4299 / JCM 9571 / NBRC 15438 / GSS1), this protein is Adenylate kinase (adkA).